Reading from the N-terminus, the 449-residue chain is Dynein regulatory complex protein 10 (449 aa).

A coiled-coil region spans residues 90–125 (AVREHEDLCQVLLENVRCLKEKERQLQEQKEAEEEG). The region spanning 400–429 (MVRAATLIQALWKGYLVRSLLRSKKKRGKG) is the IQ domain. Residues 422–449 (SKKKRGKGKAKDKEKGKQKGKEKGKGKK) are disordered. Residues 430–449 (KAKDKEKGKQKGKEKGKGKK) show a composition bias toward basic and acidic residues.

The protein belongs to the DRC10 family. As to quaternary structure, component of the nexin-dynein regulatory complex (N-DRC). Interacts with CFAP52.

It localises to the cytoplasm. Its subcellular location is the cytoskeleton. The protein localises to the flagellum axoneme. Component of the nexin-dynein regulatory complex (N-DRC), a key regulator of ciliary/flagellar motility which maintains the alignment and integrity of the distal axoneme and regulates microtubule sliding in motile axonemes. This Homo sapiens (Human) protein is Dynein regulatory complex protein 10 (IQCD).